Reading from the N-terminus, the 432-residue chain is Enolase (432 aa).

Gln167 contributes to the (2R)-2-phosphoglycerate binding site. Glu209 functions as the Proton donor in the catalytic mechanism. 3 residues coordinate Mg(2+): Asp246, Glu291, and Asp318. (2R)-2-phosphoglycerate-binding residues include Lys343, Arg372, Ser373, and Lys394. Lys343 (proton acceptor) is an active-site residue.

It belongs to the enolase family. As to quaternary structure, component of the RNA degradosome, a multiprotein complex involved in RNA processing and mRNA degradation. The cofactor is Mg(2+).

It localises to the cytoplasm. The protein resides in the secreted. Its subcellular location is the cell surface. The enzyme catalyses (2R)-2-phosphoglycerate = phosphoenolpyruvate + H2O. It participates in carbohydrate degradation; glycolysis; pyruvate from D-glyceraldehyde 3-phosphate: step 4/5. Its function is as follows. Catalyzes the reversible conversion of 2-phosphoglycerate (2-PG) into phosphoenolpyruvate (PEP). It is essential for the degradation of carbohydrates via glycolysis. This Pseudoalteromonas translucida (strain TAC 125) protein is Enolase.